Consider the following 235-residue polypeptide: Orotidine 5'-phosphate decarboxylase (235 aa).

Substrate is bound by residues D16, K38, 65–74, T120, R181, Q190, G210, and R211; that span reads DLKLHDIGNT. K67 serves as the catalytic Proton donor.

This sequence belongs to the OMP decarboxylase family. Type 1 subfamily. In terms of assembly, homodimer.

It carries out the reaction orotidine 5'-phosphate + H(+) = UMP + CO2. It participates in pyrimidine metabolism; UMP biosynthesis via de novo pathway; UMP from orotate: step 2/2. Functionally, catalyzes the decarboxylation of orotidine 5'-monophosphate (OMP) to uridine 5'-monophosphate (UMP). This Rhodopseudomonas palustris (strain BisA53) protein is Orotidine 5'-phosphate decarboxylase.